The sequence spans 902 residues: Cytosolic 10-formyltetrahydrofolate dehydrogenase (902 aa).

The interval 1-310 (MKIAVIGQSL…PASQFFKGSA (310 aa)) is hydrolase domain. Residue S9 is modified to Phosphoserine. Position 38 is an N6-succinyllysine (K38). 88–90 (QFI) contacts (6R)-10-formyltetrahydrofolate. H106 acts as the Proton donor in catalysis. D142 provides a ligand contact to (6R)-10-formyltetrahydrofolate. Residues 318–395 (EEELATAEAV…DFIQLLVRKL (78 aa)) enclose the Carrier domain. S354 carries the O-(pantetheine 4'-phosphoryl)serine modification. An aldehyde dehydrogenase domain region spans residues 417-902 (TLQMPYQLFI…LRIKTVTFEY (486 aa)). NADP(+) contacts are provided by residues 571-573 (IPW) and 597-600 (KPAQ). 2 positions are modified to phosphoserine: S629 and S631. NADP(+)-binding positions include 630 to 635 (GSLVGQ) and 650 to 651 (GS). K660 is subject to N6-succinyllysine. Catalysis depends on E673, which acts as the Proton acceptor. NADP(+) is bound at residue 673–674 (EL). The active-site Proton donor is the C707. Residue K757 participates in NADP(+) binding. At K767 the chain carries N6-succinyllysine. 804–806 (ESF) is an NADP(+) binding site. At S825 the chain carries Phosphoserine. Position 882 is an N6-acetyllysine (K882).

This sequence in the N-terminal section; belongs to the GART family. In the C-terminal section; belongs to the aldehyde dehydrogenase family. ALDH1L subfamily. In terms of assembly, homotetramer. Phosphopantetheinylation at Ser-354 by AASDHPPT is required for the formyltetrahydrofolate dehydrogenase activity. Highly expressed in liver (at protein level). Also expressed in pancreas, brain and lung (at protein level).

It is found in the cytoplasm. Its subcellular location is the cytosol. It catalyses the reaction (6R)-10-formyltetrahydrofolate + NADP(+) + H2O = (6S)-5,6,7,8-tetrahydrofolate + CO2 + NADPH + H(+). Cytosolic 10-formyltetrahydrofolate dehydrogenase that catalyzes the NADP(+)-dependent conversion of 10-formyltetrahydrofolate to tetrahydrofolate and carbon dioxide. May also have an NADP(+)-dependent aldehyde dehydrogenase activity towards formaldehyde, acetaldehyde, propionaldehyde, and benzaldehyde. This chain is Cytosolic 10-formyltetrahydrofolate dehydrogenase, found in Mus musculus (Mouse).